The following is a 386-amino-acid chain: S-adenosylmethionine synthase (386 aa).

Residue histidine 17 participates in ATP binding. Residue aspartate 19 participates in Mg(2+) binding. Glutamate 45 contributes to the K(+) binding site. Residues glutamate 58 and glutamine 101 each contribute to the L-methionine site. A flexible loop region spans residues 101–111 (QSPDISQGVTE). ATP is bound by residues 168–170 (DAK), aspartate 242, 248–249 (RK), alanine 265, and lysine 269. Aspartate 242 provides a ligand contact to L-methionine. An L-methionine-binding site is contributed by lysine 273.

The protein belongs to the AdoMet synthase family. As to quaternary structure, homotetramer; dimer of dimers. The cofactor is Mg(2+). It depends on K(+) as a cofactor.

The protein resides in the cytoplasm. The catalysed reaction is L-methionine + ATP + H2O = S-adenosyl-L-methionine + phosphate + diphosphate. Its pathway is amino-acid biosynthesis; S-adenosyl-L-methionine biosynthesis; S-adenosyl-L-methionine from L-methionine: step 1/1. Its function is as follows. Catalyzes the formation of S-adenosylmethionine (AdoMet) from methionine and ATP. The overall synthetic reaction is composed of two sequential steps, AdoMet formation and the subsequent tripolyphosphate hydrolysis which occurs prior to release of AdoMet from the enzyme. This chain is S-adenosylmethionine synthase, found in Leptospira borgpetersenii serovar Hardjo-bovis (strain JB197).